The following is a 198-amino-acid chain: Inner membrane-spanning protein YciB (198 aa).

Helical transmembrane passes span 36–56 (IYSA…AIFI), 67–87 (LTLV…SETF), 90–110 (WKAP…HFIG), 135–155 (VAWI…AFTF), and 162–182 (FKVF…GIYL).

This sequence belongs to the YciB family.

Its subcellular location is the cell inner membrane. In terms of biological role, plays a role in cell envelope biogenesis, maintenance of cell envelope integrity and membrane homeostasis. The sequence is that of Inner membrane-spanning protein YciB from Pseudomonas fluorescens (strain SBW25).